A 588-amino-acid polypeptide reads, in one-letter code: Aspartate--tRNA ligase (588 aa).

E172 contacts L-aspartate. Residues 196–199 (QLFK) are aspartate. R218 contacts L-aspartate. Residues 218-220 (RDE) and Q227 contribute to the ATP site. H449 lines the L-aspartate pocket. Residue E483 participates in ATP binding. R490 provides a ligand contact to L-aspartate. Residue 535–538 (GLDR) coordinates ATP.

Belongs to the class-II aminoacyl-tRNA synthetase family. Type 1 subfamily. In terms of assembly, homodimer.

The protein localises to the cytoplasm. It catalyses the reaction tRNA(Asp) + L-aspartate + ATP = L-aspartyl-tRNA(Asp) + AMP + diphosphate. Functionally, catalyzes the attachment of L-aspartate to tRNA(Asp) in a two-step reaction: L-aspartate is first activated by ATP to form Asp-AMP and then transferred to the acceptor end of tRNA(Asp). The polypeptide is Aspartate--tRNA ligase (Pasteurella multocida (strain Pm70)).